A 530-amino-acid polypeptide reads, in one-letter code: MKFKKIILALACLSSPLYADQDQQLKSEIQRLQHQAEDLQAQLNRLQKQLANHKSSQQKHEQQAAAKPAEPKSKPTTKSGAAIEEKYHSSKVEVHAPDAHPESISFYPTALIADNRVVTYIAGTPVVSSPFLGDRPAFDGSDYIVNISSINRDVRLMQQRRRLYRAYQKIGYPIPNMPIISLSGKTEPAATFNNPFRSTNTDGDITLGSSELDIAAALNENVEAYIAIAYDESPPAIGPRVNNSAFNLNMGFVNIGNLDKSPLYFTAGQVYVPFGRYSSAMVSAPVTMNLARTKTRPVIFGYKSQADTGPFAAFYGYRSDTTLGRSGVGGVNLGYIFGFDNDINGEIGGGFITSVADAGGMQSTGSNVGTTFGGFGSITNGNENVRKTKAADVHGHVGYDRYNLTLEWVGAVQSFRPQDLSFNGQGARPQAAQAELGMTFMAFNRPASIGVGYQWTKEALALNLPKQRYIGVFNISIWKDTVESIEYRHDIDYGLTQFANGAAPPGLVNLPTLGTGKSADTVSAQIGVFF.

Positions 1–19 (MKFKKIILALACLSSPLYA) are cleaved as a signal peptide. The stretch at 20 to 66 (DQDQQLKSEIQRLQHQAEDLQAQLNRLQKQLANHKSSQQKHEQQAAA) forms a coiled coil. Residues 50–81 (LANHKSSQQKHEQQAAAKPAEPKSKPTTKSGA) form a disordered region. The span at 63 to 79 (QAAAKPAEPKSKPTTKS) shows a compositional bias: low complexity.

This sequence belongs to the UPF0422 family.

This chain is UPF0422 protein lpp3030, found in Legionella pneumophila (strain Paris).